Reading from the N-terminus, the 318-residue chain is NAC domain-containing protein 68 (318 aa).

Residues 21–175 (LPPGFRFHPT…EWVLCRLYNK (155 aa)) form the NAC domain.

As to expression, expressed in stems, leaf blades and callus. Weakly expressed in developing flowers.

It is found in the nucleus. In terms of biological role, probable transcription factor involved in stress response. In Oryza sativa subsp. japonica (Rice), this protein is NAC domain-containing protein 68.